The sequence spans 971 residues: Translation initiation factor IF-2 (971 aa).

Over residues 49–63 (HLRKSHGATDGDKRK) the composition is skewed to basic and acidic residues. 2 disordered regions span residues 49 to 85 (HLRK…KART) and 99 to 386 (RDDV…PTEP). Positions 105–114 (GAEQGQAQVA) are enriched in low complexity. Over residues 121–181 (ELKRREEEAR…EEEAAAKRAA (61 aa)) the composition is skewed to basic and acidic residues. The span at 182–200 (AEAAAAQQAAAQQAAAEQE) shows a compositional bias: low complexity. The span at 209-260 (DEARAAAERAAQREAAKKAEDAAREAADKARAEQEEISKRRAAAEAEARAIR) shows a compositional bias: basic and acidic residues. Residues 303-325 (ARPAVKKPAGAAAPATTQAPAGA) are compositionally biased toward low complexity. Residues 355-368 (SSGGVDRGWRGGPK) are compositionally biased toward gly residues. One can recognise a tr-type G domain in the interval 471–640 (PRPPVVTVMG…LLQAEVLELK (170 aa)). Positions 480–487 (GHVDHGKT) are G1. 480 to 487 (GHVDHGKT) contacts GTP. A G2 region spans residues 505–509 (GITQH). Positions 526–529 (DTPG) are G3. GTP is bound by residues 526–530 (DTPGH) and 580–583 (NKID). The G4 stretch occupies residues 580-583 (NKID). The segment at 616–618 (SAK) is G5.

Belongs to the TRAFAC class translation factor GTPase superfamily. Classic translation factor GTPase family. IF-2 subfamily.

It is found in the cytoplasm. One of the essential components for the initiation of protein synthesis. Protects formylmethionyl-tRNA from spontaneous hydrolysis and promotes its binding to the 30S ribosomal subunits. Also involved in the hydrolysis of GTP during the formation of the 70S ribosomal complex. The chain is Translation initiation factor IF-2 from Burkholderia cenocepacia (strain ATCC BAA-245 / DSM 16553 / LMG 16656 / NCTC 13227 / J2315 / CF5610) (Burkholderia cepacia (strain J2315)).